The chain runs to 89 residues: Dynein light chain 2, cytoplasmic (89 aa).

The protein belongs to the dynein light chain family.

The protein resides in the cytoplasm. Its subcellular location is the cytoskeleton. Acts as a non-catalytic accessory component of a dynein complex. This Drosophila melanogaster (Fruit fly) protein is Dynein light chain 2, cytoplasmic (Cdlc2).